A 364-amino-acid chain; its full sequence is Threonine-phosphate decarboxylase (364 aa).

O-phospho-L-threonine contacts are provided by residues 8–9, asparagine 32, and asparagine 157; that span reads HG. An N6-(pyridoxal phosphate)lysine modification is found at lysine 216. Residues arginine 323 and arginine 337 each contribute to the O-phospho-L-threonine site.

This sequence belongs to the class-II pyridoxal-phosphate-dependent aminotransferase family. As to quaternary structure, homodimer. It depends on pyridoxal 5'-phosphate as a cofactor.

The enzyme catalyses O-phospho-L-threonine + H(+) = (R)-1-aminopropan-2-yl phosphate + CO2. It functions in the pathway cofactor biosynthesis; adenosylcobalamin biosynthesis. Decarboxylates L-threonine-O-3-phosphate to yield (R)-1-amino-2-propanol O-2-phosphate, the precursor for the linkage between the nucleotide loop and the corrin ring in cobalamin. This Salmonella typhimurium (strain LT2 / SGSC1412 / ATCC 700720) protein is Threonine-phosphate decarboxylase (cobD).